The primary structure comprises 383 residues: MTQRKDAPLVALIAGEASGDILGAGLMQALENRYPGARFIGVGGEEMAQAGLTSLFPMEKLSVMGITEVLSHLPELLRLRKSLVRFLLEQRPDVVVGIDSPDFTLPIARRLHDRGLKTVHYVSPSVWAWRQGRIKGIKKSIDLMLTLLPFEARFYEEHDVPVAFVGHPLADRIPLETDVAGARKALALDRDARILAVLPGSRGGEVGQLMPAFLDAMVALNHQDPTLQYVIPAANAARREQIQTLLNTQPNLPVSLIDGQSRTVMAAADVVLMASGTATLEGLLLNKPMVVGYRVGAVTYAIVSRLIKSEFFSLPNLLCRQEMVPELLQSQLTTEAIVAAVRRWFDQPEQAQALKIQFQSVHQQLRGGASEKAAAAVARLLEA.

Belongs to the LpxB family.

It catalyses the reaction a lipid X + a UDP-2-N,3-O-bis[(3R)-3-hydroxyacyl]-alpha-D-glucosamine = a lipid A disaccharide + UDP + H(+). It functions in the pathway bacterial outer membrane biogenesis; LPS lipid A biosynthesis. Functionally, condensation of UDP-2,3-diacylglucosamine and 2,3-diacylglucosamine-1-phosphate to form lipid A disaccharide, a precursor of lipid A, a phosphorylated glycolipid that anchors the lipopolysaccharide to the outer membrane of the cell. This chain is Lipid-A-disaccharide synthase, found in Alcanivorax borkumensis (strain ATCC 700651 / DSM 11573 / NCIMB 13689 / SK2).